A 432-amino-acid chain; its full sequence is Malate dehydrogenase [NADP], chloroplastic (432 aa).

A chloroplast-targeting transit peptide spans Met-1 to Cys-40. The tract at residues Pro-18–Thr-37 is disordered. Cys-67 and Cys-72 are joined by a disulfide. Position 96–102 (Gly-96–Ser-102) interacts with NADP(+). Positions 177 and 183 each coordinate substrate. An NADP(+)-binding site is contributed by Asn-190. NAD(+) is bound at residue Gln-197. Residue Val-214–Asn-216 participates in NADP(+) binding. Residues Asn-216 and Arg-247 each contribute to the substrate site. His-272 functions as the Proton acceptor in the catalytic mechanism. A disulfide bridge links Cys-408 with Cys-420.

It belongs to the LDH/MDH superfamily. MDH type 2 family. Homodimer.

The protein localises to the plastid. Its subcellular location is the chloroplast. The enzyme catalyses (S)-malate + NADP(+) = oxaloacetate + NADPH + H(+). Chloroplast NADP-MDH is activated upon illumination. In order to be enzymatically active, disulfide bridges on the protein must be reduced by thioredoxin which receives electrons from ferredoxin and the electron transport system of photosynthesis. Its function is as follows. The chloroplastic, NADP-dependent form is essential for the photosynthesis C4 cycle, which allows plants to circumvent the problem of photorespiration. In C4 plants, NADP-MDH activity acts to convert oxaloacetate to malate in chloroplasts of mesophyll cells for transport to the bundle sheath cells. This is Malate dehydrogenase [NADP], chloroplastic from Zea mays (Maize).